A 217-amino-acid chain; its full sequence is Large ribosomal subunit protein uL3 (217 aa).

Residues 134–154 (DATHGNSLSHRAPGSIGQCQT) are disordered. Gln-153 is modified (N5-methylglutamine).

The protein belongs to the universal ribosomal protein uL3 family. In terms of assembly, part of the 50S ribosomal subunit. Forms a cluster with proteins L14 and L19. In terms of processing, methylated by PrmB.

Functionally, one of the primary rRNA binding proteins, it binds directly near the 3'-end of the 23S rRNA, where it nucleates assembly of the 50S subunit. The sequence is that of Large ribosomal subunit protein uL3 from Coxiella burnetii (strain Dugway 5J108-111).